We begin with the raw amino-acid sequence, 103 residues long: Large ribosomal subunit protein eL14 (103 aa).

This sequence belongs to the eukaryotic ribosomal protein eL14 family.

This is Large ribosomal subunit protein eL14 from Pyrobaculum neutrophilum (strain DSM 2338 / JCM 9278 / NBRC 100436 / V24Sta) (Thermoproteus neutrophilus).